Reading from the N-terminus, the 241-residue chain is Endothelial protein C receptor (241 aa).

Residues 1–17 (MLTTLLPLLPLLLPGWA) form the signal peptide. The Extracellular segment spans residues 18 to 212 (LCSQEASDGP…GSQTGRSYTS (195 aa)). 4 N-linked (GlcNAc...) asparagine glycosylation sites follow: Asn-49, Asn-66, Asn-138, and Asn-174. Intrachain disulfides connect Cys-120/Cys-188 and Cys-221/Cys-234. The helical transmembrane segment at 213-233 (LVLGVLVGCFIVTGVAVGIFL) threads the bilayer. The Cytoplasmic portion of the chain corresponds to 234 to 241 (CTGGRRRC).

As to expression, expressed in endothelial cells.

It localises to the membrane. In terms of biological role, binds activated protein C. Enhances protein C activation by the thrombin-thrombomodulin complex; plays a role in the protein C pathway controlling blood coagulation. This Bos taurus (Bovine) protein is Endothelial protein C receptor (PROCR).